Reading from the N-terminus, the 365-residue chain is MDFKLTVLPGDGIGPEVMDEGLKVLNAVAKKYKHTFKYQYGLIGGCCIDKEGVALSPAALAMCKKSDAVLLAAVGDPRFDDPKLPVHPEDGLLALRKGLGLFANIRPVKVAPSLVNSTPIKAEIVKGTDFIFIRELTGGVYFAKPKKRWTTPAGIRKATDSMTYSENEIERIVRVGFELAKNRKKKLVSVDKANVLLSSRLWRQIVIEVAKDYPEVKVEHVLVDACAMKLILAPTYFDVIVTENLFGDILTDEASMLAGSMGMLPSASLAGIPAKGTKIFGLYEPIHGSAPTIAKQNIANPIATILSIAMMLRYSCGLETEAVEIESAVDKVLAAGYATIDIFKEGNTKLGTAEMGNQITKMIGG.

Residues Arg-96, Arg-106, Arg-134, and Asp-224 each contribute to the substrate site. 3 residues coordinate Mg(2+): Asp-224, Asp-248, and Asp-252. An NAD(+)-binding site is contributed by 288-300 (GSAPTIAKQNIAN).

The protein belongs to the isocitrate and isopropylmalate dehydrogenases family. LeuB type 1 subfamily. In terms of assembly, homodimer. Requires Mg(2+) as cofactor. The cofactor is Mn(2+).

It localises to the cytoplasm. It carries out the reaction (2R,3S)-3-isopropylmalate + NAD(+) = 4-methyl-2-oxopentanoate + CO2 + NADH. Its pathway is amino-acid biosynthesis; L-leucine biosynthesis; L-leucine from 3-methyl-2-oxobutanoate: step 3/4. Its function is as follows. Catalyzes the oxidation of 3-carboxy-2-hydroxy-4-methylpentanoate (3-isopropylmalate) to 3-carboxy-4-methyl-2-oxopentanoate. The product decarboxylates to 4-methyl-2 oxopentanoate. The sequence is that of 3-isopropylmalate dehydrogenase from Dehalococcoides mccartyi (strain CBDB1).